The following is a 191-amino-acid chain: MQKSVDPAEGITTYKILPGEFYVTKDNERIETVLGSCISACVRDPVTGVGGMNHFMLPVDKNATGASELSDANRYGNYAMENLVNALLNAGARRERLEFKLFGGGRIMSSTTNIGWYNIGFAFDYIYTEGFKIVSQDIGDVYPRKILYYPNSGRVRVRRLNAMHNQSLAAEESRYINNIGSKPVEGDVELF.

This sequence belongs to the CheD family.

It carries out the reaction L-glutaminyl-[protein] + H2O = L-glutamyl-[protein] + NH4(+). Functionally, probably deamidates glutamine residues to glutamate on methyl-accepting chemotaxis receptors (MCPs), playing an important role in chemotaxis. In Hydrogenovibrio crunogenus (strain DSM 25203 / XCL-2) (Thiomicrospira crunogena), this protein is Probable chemoreceptor glutamine deamidase CheD.